The following is a 120-amino-acid chain: U13-lycotoxin-Ls1c (120 aa).

The first 16 residues, 1 to 16 (MKILFVLISILYAVYC), serve as a signal peptide directing secretion. A propeptide spanning residues 17-54 (FSSEEDVDSAYLANELEPVEDINSEQYAALEPKEEQER) is cleaved from the precursor. 3 disulfide bridges follow: cysteine 56/cysteine 70, cysteine 69/cysteine 87, and cysteine 78/cysteine 85. The Agouti domain maps to 56-95 (CADMGQDRKDDCDCCLNIATCNCWFGRYFCSCTFGDYQTC).

The protein belongs to the neurotoxin 05 (agouti) family. Contains 5 disulfide bonds. In terms of tissue distribution, expressed by the venom gland.

The protein localises to the secreted. This Lycosa singoriensis (Wolf spider) protein is U13-lycotoxin-Ls1c.